The sequence spans 513 residues: Putative BTB/POZ domain-containing protein L55 (513 aa).

The region spanning 11 to 83 (SPIKIILQDI…FHGYKMEISD (73 aa)) is the BTB domain.

The protein belongs to the mimivirus BTB/WD family.

This is Putative BTB/POZ domain-containing protein L55 from Acanthamoeba polyphaga (Amoeba).